We begin with the raw amino-acid sequence, 155 residues long: Small ribosomal subunit protein uS7 (155 aa).

Belongs to the universal ribosomal protein uS7 family. As to quaternary structure, part of the 30S ribosomal subunit. Contacts proteins S9 and S11.

One of the primary rRNA binding proteins, it binds directly to 16S rRNA where it nucleates assembly of the head domain of the 30S subunit. Is located at the subunit interface close to the decoding center, probably blocks exit of the E-site tRNA. This chain is Small ribosomal subunit protein uS7, found in Thioalkalivibrio sulfidiphilus (strain HL-EbGR7).